A 513-amino-acid polypeptide reads, in one-letter code: Anthranilate synthase component 1 (513 aa).

L-tryptophan contacts are provided by residues S50 and 279 to 281 (PYM). Residue 314-315 (GT) participates in chorismate binding. Residue E341 participates in Mg(2+) binding. Chorismate is bound by residues Y429, R449, 463–465 (GAG), and G465. E478 is a binding site for Mg(2+).

It belongs to the anthranilate synthase component I family. As to quaternary structure, heterotetramer consisting of two non-identical subunits: a beta subunit (TrpG) and a large alpha subunit (TrpE). Mg(2+) serves as cofactor.

It carries out the reaction chorismate + L-glutamine = anthranilate + pyruvate + L-glutamate + H(+). Its pathway is amino-acid biosynthesis; L-tryptophan biosynthesis; L-tryptophan from chorismate: step 1/5. With respect to regulation, feedback inhibited by tryptophan. In terms of biological role, part of a heterotetrameric complex that catalyzes the two-step biosynthesis of anthranilate, an intermediate in the biosynthesis of L-tryptophan. In the first step, the glutamine-binding beta subunit (TrpG) of anthranilate synthase (AS) provides the glutamine amidotransferase activity which generates ammonia as a substrate that, along with chorismate, is used in the second step, catalyzed by the large alpha subunit of AS (TrpE) to produce anthranilate. In the absence of TrpG, TrpE can synthesize anthranilate directly from chorismate and high concentrations of ammonia. The protein is Anthranilate synthase component 1 (trpE) of Bacillus pumilus (Bacillus mesentericus).